Consider the following 274-residue polypeptide: Acetylaranotin bis-thiomethyltransferase (274 aa).

Belongs to the class I-like SAM-binding methyltransferase superfamily.

Its pathway is mycotoxin biosynthesis. In terms of biological role, acetylaranotin bis-thiomethyltransferase involved in the biosynthesis of acetylaranotin derivatives, members of the epipolythiodioxopiperazine (ETP) class of toxins characterized by a disulfide-bridged cyclic dipeptide. The first step of acetylaranotin biosynthesis is performed by the NRPS ataP which produces diketopiperazine cyclo-L-Phe-L-Phe via the condensation of 2 phenylalanines (L-Phe). The ataC domain of ataTC then catalyzes the formation of bishydroxylation of cyclo-L-Phe-L-Phe. The glutathione S-transferase domain ataG in ataIMG further catalyzes the conjugation of two glutathiones to the bishydroxylated intermediate. Next, the dipeptidase ataJ removes the Glu residues. The following step is performed by the carbon sulfur lyase domain ataI of ataIMG which may convert the bis-cysteinyl adduct to yield an epidithiol intermediate. The ataT domain from ataTC then catalyzes the oxidation of the free dithiols, followed by a cyclization step catalyzed by the cytochrome P450 ataF. AtaF probably acts as an epoxidase to promote a dual epoxidation formation at C8 and C9 along with C8' and C9', followed by the spontaneous nucleophilic attack of the amide nitrogens N10 and N10' to yield an intermediate with the pyrrolidine partial structure. The final steps of acetylaranotin biosynthesis involve the acetylation and ring rearrangement of an epitetrathiodiketopiperazine intermediate to produce acetylaranotin. AtaH probably catalyzes the acetylation of epitetrathiodiketopiperazine to produce a diacetate and ataY is responsible for the formation of the dihydrooxepin moiety that converts the diacetate intermediate to acetylaranotin via acetylapoaranotin. Both enzymes could function independently in the absence of the other. The acetylaranotin bis-thiomethyltransferase ataS located outside of acetylaranotin gene cluster is the main thiomethyltransferase responsible for converting acetylaranotin and its related intermediates to their methylated forms. The chain is Acetylaranotin bis-thiomethyltransferase from Aspergillus terreus (strain NIH 2624 / FGSC A1156).